The following is a 398-amino-acid chain: Protein CDKN2AIP homolog A (398 aa).

The XRN2-binding (XTBD) domain maps to 19 to 124 (LELVHGECES…KVKKRGISSS (106 aa)). Positions 118–245 (KRGISSSNEG…SDNALKPTRR (128 aa)) are disordered. Residues 131–147 (EPCKKQKSSDHGERESS) are compositionally biased toward basic and acidic residues. 3 stretches are compositionally biased toward polar residues: residues 154 to 163 (SDGNVPSTSL), 189 to 199 (RRSLPVSNAKS), and 226 to 238 (QTSM…SSDN).

Belongs to the CARF family.

It is found in the nucleus. Its subcellular location is the nucleoplasm. Its function is as follows. May regulate DNA damage response and cell proliferation. The sequence is that of Protein CDKN2AIP homolog A (cdkn2aip-a) from Xenopus laevis (African clawed frog).